Reading from the N-terminus, the 184-residue chain is Holliday junction branch migration complex subunit RuvA (184 aa).

A domain I region spans residues 1-64 (MIKAIEGVVT…EDANLLYGFL (64 aa)). The domain II stretch occupies residues 65-134 (DANEQKMFEM…IAELSDTKLI (70 aa)). Residues 134–137 (ISDE) form a flexible linker region. The segment at 138–184 (SVPSYQNEALLALEALGFKREKIVKILPDCKSENTSDLIKEALKKLG) is domain III.

This sequence belongs to the RuvA family. Homotetramer. Forms an RuvA(8)-RuvB(12)-Holliday junction (HJ) complex. HJ DNA is sandwiched between 2 RuvA tetramers; dsDNA enters through RuvA and exits via RuvB. An RuvB hexamer assembles on each DNA strand where it exits the tetramer. Each RuvB hexamer is contacted by two RuvA subunits (via domain III) on 2 adjacent RuvB subunits; this complex drives branch migration. In the full resolvosome a probable DNA-RuvA(4)-RuvB(12)-RuvC(2) complex forms which resolves the HJ.

The protein resides in the cytoplasm. Functionally, the RuvA-RuvB-RuvC complex processes Holliday junction (HJ) DNA during genetic recombination and DNA repair, while the RuvA-RuvB complex plays an important role in the rescue of blocked DNA replication forks via replication fork reversal (RFR). RuvA specifically binds to HJ cruciform DNA, conferring on it an open structure. The RuvB hexamer acts as an ATP-dependent pump, pulling dsDNA into and through the RuvAB complex. HJ branch migration allows RuvC to scan DNA until it finds its consensus sequence, where it cleaves and resolves the cruciform DNA. This is Holliday junction branch migration complex subunit RuvA from Campylobacter concisus (strain 13826).